Here is a 164-residue protein sequence, read N- to C-terminus: FMN reductase (NADH) RutF (164 aa).

It belongs to the non-flavoprotein flavin reductase family. RutF subfamily.

It carries out the reaction FMNH2 + NAD(+) = FMN + NADH + 2 H(+). Catalyzes the reduction of FMN to FMNH2 which is used to reduce pyrimidine by RutA via the Rut pathway. The protein is FMN reductase (NADH) RutF of Klebsiella pneumoniae (strain 342).